The chain runs to 185 residues: Putative manganese efflux pump MntP (185 aa).

A run of 6 helical transmembrane segments spans residues 8 to 28, 42 to 62, 66 to 86, 103 to 123, 137 to 157, and 165 to 185; these read LFVI…SIGL, ISFG…GVLF, ILVI…ILML, MYFI…FTVL, IFIG…SGYL, and KYAN…MIFM.

The protein belongs to the MntP (TC 9.B.29) family.

The protein resides in the cell membrane. Its function is as follows. Probably functions as a manganese efflux pump. The protein is Putative manganese efflux pump MntP of Clostridium novyi (strain NT).